The primary structure comprises 524 residues: Citrate exporter 1 (524 aa).

The interval 1–49 is disordered; it reads MSSTTSSSRSDLEKVPVPQVTPRDSDSDKGSLSPEPSTLEAQSSEKPPH. A compositionally biased stretch (polar residues) spans 34 to 45; the sequence is PEPSTLEAQSSE. The chain crosses the membrane as a helical span at residues 60–80; it reads MVCIVSLAAIFSPLSSNIYFP. N90 carries N-linked (GlcNAc...) asparagine glycosylation. Helical transmembrane passes span 95–115, 125–145, 155–175, 186–206, and 215–235; these read LATL…SFWG, PVFI…AESK, ALQA…IGDI, GIFG…GGIF, and IFWF…VLLP. Residue N244 is glycosylated (N-linked (GlcNAc...) asparagine). The next 6 helical transmembrane spans lie at 296–316, 332–352, 395–415, 417–437, 459–479, and 481–501; these read VFIT…VTSS, IGLT…LVGY, TWWV…SLRT, LAVP…LFTI, LMRC…LDAL, and PDYT…LLYV.

It belongs to the major facilitator superfamily.

The protein resides in the cell membrane. The catalysed reaction is citrate(in) = citrate(out). Its function is as follows. Transmembrane transporter that exports citrate across the cell membrane. This Aspergillus niger (strain ATCC 1015 / CBS 113.46 / FGSC A1144 / LSHB Ac4 / NCTC 3858a / NRRL 328 / USDA 3528.7) protein is Citrate exporter 1.